Here is a 267-residue protein sequence, read N- to C-terminus: 3-oxoadipate enol-lactonase 2 (267 aa).

It carries out the reaction (4,5-dihydro-5-oxofuran-2-yl)-acetate + H2O = 3-oxoadipate + H(+). The protein operates within aromatic compound metabolism; beta-ketoadipate pathway; 3-oxoadipate from 5-oxo-4,5-dihydro-2-furylacetate: step 1/1. This is 3-oxoadipate enol-lactonase 2 (catD) from Acinetobacter baylyi (strain ATCC 33305 / BD413 / ADP1).